The following is a 289-amino-acid chain: MDSVKIALQYIMPKHLVSRLVGKFAAAKAGALTQAFINWFIKQYKVDMSEAAQSDPKAYASFNDFFTRALKDGIRPLCQEDGIMVHPVDGAVSQRGPIEAGQIVQAKGHHYSSVALLGGDEKDAARFDNGDFATIYLAPKDYHRIHMPITGTLSKMIYVPGELFSVNPLTAQNVPGLFARNERVVAIFETQVGPLAMVLVGATIVASIETVWAGTVTPPAGKQVFTWEYPTTGSDALTLEKGAEMGRFKLGSTVVMLFAQDAIDTFAAGVDPGETTRMGQKFANLNKSK.

Catalysis depends on charge relay system; for autoendoproteolytic cleavage activity residues Asp89, His146, and Ser252. The active-site Schiff-base intermediate with substrate; via pyruvic acid; for decarboxylase activity is the Ser252. Pyruvic acid (Ser); by autocatalysis is present on Ser252.

It belongs to the phosphatidylserine decarboxylase family. PSD-B subfamily. Prokaryotic type I sub-subfamily. As to quaternary structure, heterodimer of a large membrane-associated beta subunit and a small pyruvoyl-containing alpha subunit. Pyruvate is required as a cofactor. Post-translationally, is synthesized initially as an inactive proenzyme. Formation of the active enzyme involves a self-maturation process in which the active site pyruvoyl group is generated from an internal serine residue via an autocatalytic post-translational modification. Two non-identical subunits are generated from the proenzyme in this reaction, and the pyruvate is formed at the N-terminus of the alpha chain, which is derived from the carboxyl end of the proenzyme. The autoendoproteolytic cleavage occurs by a canonical serine protease mechanism, in which the side chain hydroxyl group of the serine supplies its oxygen atom to form the C-terminus of the beta chain, while the remainder of the serine residue undergoes an oxidative deamination to produce ammonia and the pyruvoyl prosthetic group on the alpha chain. During this reaction, the Ser that is part of the protease active site of the proenzyme becomes the pyruvoyl prosthetic group, which constitutes an essential element of the active site of the mature decarboxylase.

The protein resides in the cell membrane. It catalyses the reaction a 1,2-diacyl-sn-glycero-3-phospho-L-serine + H(+) = a 1,2-diacyl-sn-glycero-3-phosphoethanolamine + CO2. It participates in phospholipid metabolism; phosphatidylethanolamine biosynthesis; phosphatidylethanolamine from CDP-diacylglycerol: step 2/2. In terms of biological role, catalyzes the formation of phosphatidylethanolamine (PtdEtn) from phosphatidylserine (PtdSer). The polypeptide is Phosphatidylserine decarboxylase proenzyme (Shewanella denitrificans (strain OS217 / ATCC BAA-1090 / DSM 15013)).